We begin with the raw amino-acid sequence, 132 residues long: Large ribosomal subunit protein uL14 (132 aa).

Belongs to the universal ribosomal protein uL14 family. The L3/L14/L24e cluster may contact the 16S rRNA in 2 intersubunit bridges. Part of the 50S ribosomal subunit. Forms a cluster with proteins L3 and L24e.

Functionally, forms part of two intersubunit bridges in the 70S ribosome. Binds to 23S rRNA. This is Large ribosomal subunit protein uL14 from Haloarcula marismortui (strain ATCC 43049 / DSM 3752 / JCM 8966 / VKM B-1809) (Halobacterium marismortui).